Consider the following 225-residue polypeptide: MENVLKNDWGPLLAPEFEKEYYRKLADFLKEEYSTHVVYPKKEDIFNALEYTSYENTKVVILGQDPYHGPNQAHGLSFSVQPGIKTPPSLLNMYKELRDEYGYDIPNNGYLVKWAEQGVLLLNTVLTVRQGEANSHKGKGWEHFTDRVIELLNEREKPVIFILWGRHAQAKKKLITNTKHHIIESVHPSPLSARRGFFGSKPYSKVNTILANMGEREIDWEIPNL.

The active-site Proton acceptor is the D65.

Belongs to the uracil-DNA glycosylase (UDG) superfamily. UNG family.

The protein localises to the cytoplasm. The enzyme catalyses Hydrolyzes single-stranded DNA or mismatched double-stranded DNA and polynucleotides, releasing free uracil.. In terms of biological role, excises uracil residues from the DNA which can arise as a result of misincorporation of dUMP residues by DNA polymerase or due to deamination of cytosine. The protein is Uracil-DNA glycosylase of Bacillus cereus (strain AH187).